A 471-amino-acid polypeptide reads, in one-letter code: MGAFLLFVCVLAPFLLVCAVRGRRRQAGSSEAAACGLPLPPGSMGWPYVGETFQLYSSKNPNVFFNKKRNKYGPIFKTHILGCPCVMVSSPEAARFVLVTQAHLFKPTFPASKERMLGPQAIFFQQGDYHAHLRRIVSRAFSPESIRASVPAIEAIALRSLHSWDGQFVNTFQEMKTYALNVALLSIFGEEEMRYIEELKQCYLTLEKGYNSMPVNLPGTLFHKAMKARKRLGAIVAHIISARRERQRGNDLLGSFVDGREALTDAQIADNVIGVIFAARDTTASVLTWMVKFLGDHPAVLKAVTEEQLQIAKEKEASGEPLSWADTRRMKMTSRVIQETMRVASILSFTFREAVEDVEYQGYLIPKGWKVLPLFRNIHHNPDHFPCPEKFDPSRFEVAPKPNTFMPFGNGTHSCPGNELAKLEMLVLFHHLATKYRWSTSKSESGVQFGPFALPLNGLPMSFTRKNTEQE.

Residues M1–R21 form a helical membrane-spanning segment. C415 contributes to the heme binding site.

It belongs to the cytochrome P450 family. Heme is required as a cofactor. In terms of tissue distribution, in seedlings and expanding leaves.

It localises to the membrane. The enzyme catalyses 2-cis-(+)-abscisate + reduced [NADPH--hemoprotein reductase] + O2 = (+)-8'-hydroxyabscisate + oxidized [NADPH--hemoprotein reductase] + H2O + H(+). It functions in the pathway plant hormone degradation; abscisic acid degradation. Its function is as follows. Involved in the oxidative degradation of abscisic acid. The protein is Abscisic acid 8'-hydroxylase 1 (CYP707A5) of Oryza sativa subsp. indica (Rice).